Here is a 207-residue protein sequence, read N- to C-terminus: Ribosomal RNA small subunit methyltransferase G (207 aa).

S-adenosyl-L-methionine-binding positions include Gly-77, Phe-82, Glu-100 to Ser-102, and Arg-141.

This sequence belongs to the methyltransferase superfamily. RNA methyltransferase RsmG family.

It is found in the cytoplasm. Functionally, specifically methylates the N7 position of a guanine in 16S rRNA. The polypeptide is Ribosomal RNA small subunit methyltransferase G (Borrelia hermsii (strain HS1 / DAH)).